Consider the following 518-residue polypeptide: MESPEEPGASMDENYFVNYTFKDRSHSGRVAQGIMKLCLEEELFADVTISVEGREFQLHRLVLSAQSCFFRSMFTSNLKEAHNRVIVLQDVSESVFQLLVDYIYHGTVKLRAEELQEIYEVSDMYQLTSLFEECSRFLARTVQVGNCLQVMWLADRHSDPELYTAAKHCAKTHLAQLQNTEEFLHLPHHLLTDIISDGVPCSQNPTEAIEAWINFNKEEREAFAESLRTSLKEIGENVHIYLIGKESSRTHSLAVSLHCAEDDSISVSGQNSLCHQITAACKHGGDLYVVGGSIPRRMWKCNNATVDWEWCAPLPRDRLQHTLVSVPGKDAIYSLGGKTLQDTLSNAVIYYRVGDNVWTETTQLEVAVSGAAGANLNGIIYLLGGEENDLDFFTKPSRLIQCFDTETDKCHVKPYVLPFAGRMHAAVHKDLVFIVAEGDSLVCYNPLLDSFTRLCLPEAWSSAPSLWKIASCNGSIYVFRDRYKKGDANTYKLDPATSAVTVTRGIKVLLTNLQFVLA.

Residues 45–112 enclose the BTB domain; that stretch reads ADVTISVEGR…IYHGTVKLRA (68 aa). Residues 147 to 239 enclose the BACK domain; sequence CLQVMWLADR…SLKEIGENVH (93 aa). Kelch repeat units lie at residues 239–285, 286–328, 331–378, 380–430, and 432–481; these read HIYL…KHGG, DLYV…SVPG, AIYS…NLNG, IYLL…VHKD, and VFIV…VFRD.

In terms of assembly, component of the BCR(KBTBD4) E3 ubiquitin ligase complex, at least composed of CUL3, KBTBD4 and RBX1.

Functionally, substrate-specific adapter of a BCR (BTB-CUL3-RBX1) E3 ubiquitin ligase complex which targets CoREST corepressor complex components RCOR1, KDM1A/LSD1 and HDAC2 for proteasomal degradation. RCOR1 is likely to be the primary target while degradation of KDM1A and HDAC2 is likely due to their association with RCOR1. Also targets RCOR3, MIER2 and MIER3 for proteasomal degradation as well as associated proteins ZNF217 and RREB1. Degradation is dependent on the presence of an ELM2 domain in the target proteins. In Pongo abelii (Sumatran orangutan), this protein is Kelch repeat and BTB domain-containing protein 4 (KBTBD4).